Here is an 867-residue protein sequence, read N- to C-terminus: Mitochondrial escape protein 2 (867 aa).

The transit peptide at 1-25 (MIIRTLRSQLRLPKPVYISPPCRYY) directs the protein to the mitochondrion. Over 26–279 (STDLEKLKKE…LVSLISNHTK (254 aa)) the chain is Mitochondrial matrix. The 86-residue stretch at 179-264 (GTPWIEDLRR…TTLHIQFVAI (86 aa)) folds into the RRM domain. A helical membrane pass occupies residues 280 to 300 (IAIPVLIALLATFAVLIFDPI). Residues 301 to 867 (REWFIEYKIL…DGKSFLGIKF (567 aa)) are Mitochondrial intermembrane-facing. The stretch at 795 to 852 (IGRLISLEAAKIQKLEEELEKIYKIGKVDGRIDYVSQKIEASNKKILDLEKQAADVAS) forms a coiled coil.

The protein belongs to the YME2 family.

Its subcellular location is the mitochondrion inner membrane. Functionally, plays a role in maintaining the mitochondrial genome and in controlling the mtDNA escape. Involved in the regulation of mtDNA nucleotide structure and number. May have a dispensable role in early maturation of pre-rRNA. The polypeptide is Mitochondrial escape protein 2 (PRP13) (Candida albicans (strain SC5314 / ATCC MYA-2876) (Yeast)).